Here is a 157-residue protein sequence, read N- to C-terminus: Phosphopantetheine adenylyltransferase (157 aa).

T10 lines the substrate pocket. ATP is bound by residues T10–F11 and H18. Substrate is bound by residues K42, L74, and R88. Residues G89 to R91, E99, and N124 to S130 contribute to the ATP site.

The protein belongs to the bacterial CoaD family. Homohexamer. Requires Mg(2+) as cofactor.

It localises to the cytoplasm. The enzyme catalyses (R)-4'-phosphopantetheine + ATP + H(+) = 3'-dephospho-CoA + diphosphate. Its pathway is cofactor biosynthesis; coenzyme A biosynthesis; CoA from (R)-pantothenate: step 4/5. Its function is as follows. Reversibly transfers an adenylyl group from ATP to 4'-phosphopantetheine, yielding dephospho-CoA (dPCoA) and pyrophosphate. This chain is Phosphopantetheine adenylyltransferase, found in Helicobacter pylori (strain P12).